A 211-amino-acid chain; its full sequence is Large ribosomal subunit protein eL13 (211 aa).

N6-acetyllysine is present on K16. S52, S77, and S106 each carry phosphoserine. Residues K123 and K145 each participate in a glycyl lysine isopeptide (Lys-Gly) (interchain with G-Cter in SUMO2) cross-link. K174 is covalently cross-linked (Glycyl lysine isopeptide (Lys-Gly) (interchain with G-Cter in SUMO1); alternate). Residues K174 and K177 each participate in a glycyl lysine isopeptide (Lys-Gly) (interchain with G-Cter in SUMO2); alternate cross-link. K177 carries the post-translational modification N6-acetyllysine; alternate.

The protein belongs to the eukaryotic ribosomal protein eL13 family. As to quaternary structure, component of the 60S large ribosomal subunit (LSU).

It localises to the cytoplasm. In terms of biological role, component of the ribosome, a large ribonucleoprotein complex responsible for the synthesis of proteins in the cell. The small ribosomal subunit (SSU) binds messenger RNAs (mRNAs) and translates the encoded message by selecting cognate aminoacyl-transfer RNA (tRNA) molecules. The large subunit (LSU) contains the ribosomal catalytic site termed the peptidyl transferase center (PTC), which catalyzes the formation of peptide bonds, thereby polymerizing the amino acids delivered by tRNAs into a polypeptide chain. The nascent polypeptides leave the ribosome through a tunnel in the LSU and interact with protein factors that function in enzymatic processing, targeting, and the membrane insertion of nascent chains at the exit of the ribosomal tunnel. As part of the LSU, it is probably required for its formation and the maturation of rRNAs. Plays a role in bone development. This is Large ribosomal subunit protein eL13 (Rpl13) from Rattus norvegicus (Rat).